A 368-amino-acid chain; its full sequence is Chorismate synthase (368 aa).

Position 46 (Arg46) interacts with NADP(+). FMN contacts are provided by residues 124 to 126 (RAS), Gly284, 299 to 303 (KPTPS), and Arg326.

It belongs to the chorismate synthase family. FMNH2 serves as cofactor.

The enzyme catalyses 5-O-(1-carboxyvinyl)-3-phosphoshikimate = chorismate + phosphate. It participates in metabolic intermediate biosynthesis; chorismate biosynthesis; chorismate from D-erythrose 4-phosphate and phosphoenolpyruvate: step 7/7. Catalyzes the anti-1,4-elimination of the C-3 phosphate and the C-6 proR hydrogen from 5-enolpyruvylshikimate-3-phosphate (EPSP) to yield chorismate, which is the branch point compound that serves as the starting substrate for the three terminal pathways of aromatic amino acid biosynthesis. This reaction introduces a second double bond into the aromatic ring system. The protein is Chorismate synthase of Pyrobaculum aerophilum (strain ATCC 51768 / DSM 7523 / JCM 9630 / CIP 104966 / NBRC 100827 / IM2).